Reading from the N-terminus, the 257-residue chain is MMFHPFHLVEKSPWPITSSISALSLTLGFVSYFQNLSMYLILLAVLMITISSFQWWRDISREGSFQGFHTHWVLNGLKMGMILFILSEVFFFVSFFWAFFHSSLSPNIEIGSQWPPKGIYPFNPFEIPLLNSTILISSGITVTWSHHAIMNKNYISALNSLLITILLGVAFTMFQGFEYFQAQFKISDGIFGSTFFMTTGFHGLHVLIGSIFLLVSYFRIKNQLISSDHFFGFEASAWYWHFVDVVWLFLFTFMYWW.

6 helical membrane passes run 13 to 33 (PWPITSSISALSLTLGFVSYF), 36 to 56 (LSMYLILLAVLMITISSFQWW), 80 to 100 (GMILFILSEVFFFVSFFWAFF), 154 to 174 (YISALNSLLITILLGVAFTMF), 195 to 215 (FFMTTGFHGLHVLIGSIFLLV), and 237 to 257 (AWYWHFVDVVWLFLFTFMYWW).

It belongs to the cytochrome c oxidase subunit 3 family. As to quaternary structure, component of the cytochrome c oxidase (complex IV, CIV), a multisubunit enzyme composed of a catalytic core of 3 subunits and several supernumerary subunits. The complex exists as a monomer or a dimer and forms supercomplexes (SCs) in the inner mitochondrial membrane with ubiquinol-cytochrome c oxidoreductase (cytochrome b-c1 complex, complex III, CIII).

It is found in the mitochondrion inner membrane. The catalysed reaction is 4 Fe(II)-[cytochrome c] + O2 + 8 H(+)(in) = 4 Fe(III)-[cytochrome c] + 2 H2O + 4 H(+)(out). Component of the cytochrome c oxidase, the last enzyme in the mitochondrial electron transport chain which drives oxidative phosphorylation. The respiratory chain contains 3 multisubunit complexes succinate dehydrogenase (complex II, CII), ubiquinol-cytochrome c oxidoreductase (cytochrome b-c1 complex, complex III, CIII) and cytochrome c oxidase (complex IV, CIV), that cooperate to transfer electrons derived from NADH and succinate to molecular oxygen, creating an electrochemical gradient over the inner membrane that drives transmembrane transport and the ATP synthase. Cytochrome c oxidase is the component of the respiratory chain that catalyzes the reduction of oxygen to water. Electrons originating from reduced cytochrome c in the intermembrane space (IMS) are transferred via the dinuclear copper A center (CU(A)) of subunit 2 and heme A of subunit 1 to the active site in subunit 1, a binuclear center (BNC) formed by heme A3 and copper B (CU(B)). The BNC reduces molecular oxygen to 2 water molecules using 4 electrons from cytochrome c in the IMS and 4 protons from the mitochondrial matrix. This chain is Cytochrome c oxidase subunit 3 (COIII), found in Rhipicephalus sanguineus (Brown dog tick).